An 863-amino-acid polypeptide reads, in one-letter code: MSRYDPSMIEPKWQKAWAEAGTFTASMEGNKPKYYVLEMFPYPSGRIHIGHVRNYTMGDVIARHKKAMGHNVLHPMGFDAFGLAAENAAMDRGIHPKDWTYKNMDDMRDQMRPLGFSIDWSRDLATCDPDYYGQQQALFIDMMEAGLIDRKNAVVNWDPVDMTVLANEQVEDGKGWRSGAEVERKELTQWFFKISDYSDELLEALDGLDDWPAKVKLMQANWIGKSRGLQFAFGLVEPVGGHDRVDVYTTRPDTLLGASFVGISPDHAIAKQLESESEDIAAFCAECRKGGTTAAEVETAEKLGFDTGLKVRHPFDTAAQLPVYIANFILMDYGTGAIFGCPAHDERDLDFARKYDLPVVSTYVPIDDEGHVLPEDGGAAYVPPKPDPVRYIRGFAGEEIQSGNDAIDAAVTFCEAEGVGQGVTKFRLRDWGLSRQRYWGCPIPVVHCDACGVVPEKKENLPIELPYDVTFDVPGNPLDRHPTWRNTPCPSCGAPALRETDTMDTFVDSSWYFARFTAPHADTPTSKAEVEYWMNVDQYIGGIEHAILHLLYSRFFARAMHITGHLPRKAIEPFDALFTQGMVTHAIYKTTDAKNRPVYHYPETVDLRDGGGYLDDGTAVEIIPSAKMSKSKNNVVDPIEIIKQYGADTARWFVLSDSPPERDVEWTASGAEAAYKHLGRVWALCDRISEAARSVSEEAQPAAGEHDTALLREMHKTIRDVTNGVDSFGFNAAIAKLYAFTNTLQKSKASHKAQREAVMTLAQLMAPMTPHLSEDIWAHQGGDGLIADAPWPVANEAMLVESTVTLPIQINGKRRSEVTVAKDASKEEVEKRALADDAVVRALDGAAPKKLIVVPGRIVNVVI.

The 'HIGH' region motif lies at 41–51 (PYPSGRIHIGH). Residues 627–631 (KMSKS) carry the 'KMSKS' region motif. Residue lysine 630 participates in ATP binding.

Belongs to the class-I aminoacyl-tRNA synthetase family.

The protein resides in the cytoplasm. It carries out the reaction tRNA(Leu) + L-leucine + ATP = L-leucyl-tRNA(Leu) + AMP + diphosphate. The sequence is that of Leucine--tRNA ligase from Jannaschia sp. (strain CCS1).